A 170-amino-acid polypeptide reads, in one-letter code: Adenine phosphoribosyltransferase (170 aa).

It belongs to the purine/pyrimidine phosphoribosyltransferase family. In terms of assembly, homodimer.

It localises to the cytoplasm. It carries out the reaction AMP + diphosphate = 5-phospho-alpha-D-ribose 1-diphosphate + adenine. It functions in the pathway purine metabolism; AMP biosynthesis via salvage pathway; AMP from adenine: step 1/1. In terms of biological role, catalyzes a salvage reaction resulting in the formation of AMP, that is energically less costly than de novo synthesis. In Cyanothece sp. (strain PCC 7425 / ATCC 29141), this protein is Adenine phosphoribosyltransferase.